A 476-amino-acid polypeptide reads, in one-letter code: ATP synthase subunit beta (476 aa).

162-169 (GGAGVGKT) contributes to the ATP binding site.

Belongs to the ATPase alpha/beta chains family. As to quaternary structure, F-type ATPases have 2 components, CF(1) - the catalytic core - and CF(0) - the membrane proton channel. CF(1) has five subunits: alpha(3), beta(3), gamma(1), delta(1), epsilon(1). CF(0) has three main subunits: a(1), b(2) and c(9-12). The alpha and beta chains form an alternating ring which encloses part of the gamma chain. CF(1) is attached to CF(0) by a central stalk formed by the gamma and epsilon chains, while a peripheral stalk is formed by the delta and b chains.

It localises to the cell membrane. The enzyme catalyses ATP + H2O + 4 H(+)(in) = ADP + phosphate + 5 H(+)(out). Its function is as follows. Produces ATP from ADP in the presence of a proton gradient across the membrane. The catalytic sites are hosted primarily by the beta subunits. In Mycoplasma capricolum subsp. capricolum (strain California kid / ATCC 27343 / NCTC 10154), this protein is ATP synthase subunit beta.